The sequence spans 623 residues: Glutathione import ATP-binding protein GsiA (623 aa).

ABC transporter domains follow at residues 15 to 269 (VENL…RALL) and 314 to 564 (LRVR…RKLL). ATP contacts are provided by residues 49-56 (GESGSGKS) and 357-364 (GESGSGKS).

This sequence belongs to the ABC transporter superfamily. Glutathione importer (TC 3.A.1.5.11) family. As to quaternary structure, the complex is composed of two ATP-binding proteins (GsiA), two transmembrane proteins (GsiC and GsiD) and a solute-binding protein (GsiB).

Its subcellular location is the cell inner membrane. The enzyme catalyses glutathione(out) + ATP + H2O = glutathione(in) + ADP + phosphate + H(+). Functionally, part of the ABC transporter complex GsiABCD involved in glutathione import. Responsible for energy coupling to the transport system. The protein is Glutathione import ATP-binding protein GsiA of Escherichia coli O6:H1 (strain CFT073 / ATCC 700928 / UPEC).